Reading from the N-terminus, the 282-residue chain is Glutamyl endopeptidase (282 aa).

Residues methionine 1 to alanine 27 form the signal peptide. The propeptide occupies lysine 28 to serine 66. Active-site charge relay system residues include histidine 117, aspartate 159, and serine 235.

It belongs to the peptidase S1B family. In terms of assembly, monomer.

Its subcellular location is the secreted. It catalyses the reaction Preferential cleavage: Glu-|-Xaa, Asp-|-Xaa.. Its activity is regulated as follows. Inhibited by diisopropyl fluorophosphate. Exhibits a significant hydrolytic activity for the carbonyl side of glutamic acid. Shows activity toward human fibronectin and type 1 collagen. This Staphylococcus epidermidis protein is Glutamyl endopeptidase (gseA).